A 478-amino-acid polypeptide reads, in one-letter code: RNA-binding protein 42 (478 aa).

Residues 1–20 show a composition bias toward low complexity; that stretch reads MASAMAGAGPAPGLPVAGGP. Residues 1–33 form a disordered region; the sequence is MASAMAGAGPAPGLPVAGGPVVPGPGVGIPGKS. Alanine 2 bears the N-acetylalanine mark. Position 133 is a phosphoserine (serine 133). Asymmetric dimethylarginine occurs at positions 151, 156, 166, and 179. 2 disordered regions span residues 171-209 and 317-354; these read LSSAAGGPRPMALRPPHQALVGPPLPGPPGPPMMLPPMA and SLRPRPRPPRPEPPPGLMALEVPEPLGEDKKKGKPEKL. The segment covering 193–205 has biased composition (pro residues); the sequence is PPLPGPPGPPMML. The tract at residues 234-478 is necessary for interaction with HNRNPK; it reads DLGLGLGLGL…QKEKKKLGLR (245 aa). Positions 343–354 are enriched in basic and acidic residues; the sequence is GEDKKKGKPEKL. The region spanning 379–457 is the RRM domain; that stretch reads FRIFCGDLGN…RPIKLRKSMW (79 aa).

This sequence belongs to the RRM RBM42 family. As to quaternary structure, interacts with HNRNPK.

The protein resides in the nucleus. It is found in the cytoplasm. In terms of biological role, binds (via the RRM domain) to the 3' untranslated region (UTR) of p21 mRNA. The polypeptide is RNA-binding protein 42 (Rbm42) (Rattus norvegicus (Rat)).